The sequence spans 339 residues: 4-hydroxy-2-oxovalerate aldolase (339 aa).

Positions 7–259 (VILHDMSLRD…QSGIDLYKIM (253 aa)) constitute a Pyruvate carboxyltransferase domain. A substrate-binding site is contributed by 15–16 (RD). D16 is a Mn(2+) binding site. H19 serves as the catalytic Proton acceptor. 2 residues coordinate substrate: S169 and H198. Residues H198 and H200 each contribute to the Mn(2+) site. Residue Y289 coordinates substrate.

This sequence belongs to the 4-hydroxy-2-oxovalerate aldolase family.

The catalysed reaction is (S)-4-hydroxy-2-oxopentanoate = acetaldehyde + pyruvate. The chain is 4-hydroxy-2-oxovalerate aldolase from Marinomonas sp. (strain MWYL1).